The primary structure comprises 147 residues: UPF0178 protein Patl_1318 (147 aa).

It belongs to the UPF0178 family.

In Pseudoalteromonas atlantica (strain T6c / ATCC BAA-1087), this protein is UPF0178 protein Patl_1318.